The sequence spans 129 residues: Small ribosomal subunit protein uS11 (129 aa).

It belongs to the universal ribosomal protein uS11 family. In terms of assembly, part of the 30S ribosomal subunit. Interacts with proteins S7 and S18. Binds to IF-3.

Functionally, located on the platform of the 30S subunit, it bridges several disparate RNA helices of the 16S rRNA. Forms part of the Shine-Dalgarno cleft in the 70S ribosome. This is Small ribosomal subunit protein uS11 from Thermosipho africanus (strain TCF52B).